Consider the following 349-residue polypeptide: Fructose-bisphosphate aldolase 2, chloroplastic (349 aa).

Substrate is bound by residues R47 and K137. E177 functions as the Proton acceptor in the catalytic mechanism. Residue K219 is the Schiff-base intermediate with dihydroxyacetone-P of the active site.

The protein belongs to the class I fructose-bisphosphate aldolase family.

The protein localises to the plastid. The protein resides in the chloroplast. It catalyses the reaction beta-D-fructose 1,6-bisphosphate = D-glyceraldehyde 3-phosphate + dihydroxyacetone phosphate. It participates in carbohydrate degradation; glycolysis; D-glyceraldehyde 3-phosphate and glycerone phosphate from D-glucose: step 4/4. The sequence is that of Fructose-bisphosphate aldolase 2, chloroplastic from Pisum sativum (Garden pea).